We begin with the raw amino-acid sequence, 508 residues long: Ribonuclease Y (508 aa).

Residues 198-264 form the KH domain; sequence TVSVINLPND…RLTIEKLITD (67 aa). Positions 324 to 417 constitute an HD domain; the sequence is VLTHSIEVAK…VQAADAVSAS (94 aa).

Belongs to the RNase Y family.

Endoribonuclease that initiates mRNA decay. This chain is Ribonuclease Y, found in Fusobacterium nucleatum subsp. nucleatum (strain ATCC 25586 / DSM 15643 / BCRC 10681 / CIP 101130 / JCM 8532 / KCTC 2640 / LMG 13131 / VPI 4355).